A 493-amino-acid chain; its full sequence is MTDVRVRFCPSPTGTPHVGLVRTALFNWAYARHTGGKLVFRIEDTDAARDSEESYSAIIDSLRWLGMDWDEGVEKGGPHEPYRQSQRKDIYQDVLKQLIDAGEVYPAYSTAEEVEERHKAAGRDPKLGYDNFDRDLTEEQVAAFEAEGRKPVWRLRMPEQDWKWTDLVRGEVEFKSFTQPDFVVARSNGEPLYTLVNPVDDALMEVTHVLRGEDLLPSTPRQLALYEALKRIGVAKATPAFGHLPFVMGEGNKKLSKRDPQSSLFNHRDNGIIPEGMLNYLALLGWSLSADQDIFGVDELIANFDVADVLGNPARFDQKKLEAINADHIRLLEPKDFEARLRAYMTEYTEFPADYPAEKFAIAAELVQTRIKVLSEAWDLLKFLVTADEDLVFNEKAAKKNLKETAVEPLNAGIAALEAVEEWTTPNIEAALNKALIEDLGLKPRVAFGALRIGISGEAVSPPLFESMELLGKESTLVRLKVTREQTPFVVAE.

Residues 10–20 (PSPTGTPHVGL) carry the 'HIGH' region motif. The short motif at 254–258 (KLSKR) is the 'KMSKS' region element. Lys257 serves as a coordination point for ATP.

It belongs to the class-I aminoacyl-tRNA synthetase family. Glutamate--tRNA ligase type 1 subfamily. In terms of assembly, monomer.

The protein resides in the cytoplasm. The catalysed reaction is tRNA(Glu) + L-glutamate + ATP = L-glutamyl-tRNA(Glu) + AMP + diphosphate. Its function is as follows. Catalyzes the attachment of glutamate to tRNA(Glu) in a two-step reaction: glutamate is first activated by ATP to form Glu-AMP and then transferred to the acceptor end of tRNA(Glu). The polypeptide is Glutamate--tRNA ligase (Corynebacterium glutamicum (strain ATCC 13032 / DSM 20300 / JCM 1318 / BCRC 11384 / CCUG 27702 / LMG 3730 / NBRC 12168 / NCIMB 10025 / NRRL B-2784 / 534)).